A 154-amino-acid chain; its full sequence is Putative nuclear shuttle protein (154 aa).

It belongs to the nanoviridae nuclear shuttle protein family.

Its subcellular location is the host nucleus. It is found in the host cytoplasm. Its function is as follows. Putative nuclear shuttle protein. The chain is Putative nuclear shuttle protein (DNA-N) from Musa (BBTV).